Consider the following 349-residue polypeptide: Small ribosomal subunit biogenesis GTPase RsgA 2 (349 aa).

A CP-type G domain is found at 97–252 (AEQLIATNVD…IIDTPGMREL (156 aa)). GTP contacts are provided by residues 142 to 145 (TKAD) and 194 to 202 (GSSGVGKST). Zn(2+)-binding residues include Cys-275, Cys-280, His-282, and Cys-288.

It belongs to the TRAFAC class YlqF/YawG GTPase family. RsgA subfamily. As to quaternary structure, monomer. Associates with 30S ribosomal subunit, binds 16S rRNA. The cofactor is Zn(2+).

The protein resides in the cytoplasm. Its function is as follows. One of several proteins that assist in the late maturation steps of the functional core of the 30S ribosomal subunit. Helps release RbfA from mature subunits. May play a role in the assembly of ribosomal proteins into the subunit. Circularly permuted GTPase that catalyzes slow GTP hydrolysis, GTPase activity is stimulated by the 30S ribosomal subunit. The polypeptide is Small ribosomal subunit biogenesis GTPase RsgA 2 (Vibrio vulnificus (strain CMCP6)).